The following is a 241-amino-acid chain: Small ribosomal subunit protein eS4 (241 aa).

An S4 RNA-binding domain is found at 43–105 (IPLVMVLRDI…INKTFRVLQD (63 aa)).

Belongs to the eukaryotic ribosomal protein eS4 family.

The chain is Small ribosomal subunit protein eS4 from Methanosphaera stadtmanae (strain ATCC 43021 / DSM 3091 / JCM 11832 / MCB-3).